The following is a 327-amino-acid chain: 2-methoxy-6-polyprenyl-1,4-benzoquinol methylase, mitochondrial (327 aa).

Residues M1–A49 constitute a mitochondrion transit peptide. S-adenosyl-L-methionine-binding positions include T117, D171, and D199–A200.

Belongs to the class I-like SAM-binding methyltransferase superfamily. MenG/UbiE family. In terms of assembly, component of a multi-subunit COQ enzyme complex, composed of at least COQ3, COQ4, COQ5, COQ6, COQ7 and COQ9. Interacts with PYURF; the interaction is direct, stabilizes COQ5 protein and associates PYURF with COQ enzyme complex.

The protein localises to the mitochondrion inner membrane. It catalyses the reaction 2-methoxy-6-(all-trans-decaprenyl)benzene-1,4-diol + S-adenosyl-L-methionine = 5-methoxy-2-methyl-3-(all-trans-decaprenyl)benzene-1,4-diol + S-adenosyl-L-homocysteine + H(+). It functions in the pathway cofactor biosynthesis; ubiquinone biosynthesis. Its function is as follows. Methyltransferase required for the conversion of 2-decaprenyl-6-methoxy-1,4-benzoquinol (DDMQH2) to 2-decaprenyl-3-methyl-6-methoxy-1,4-benzoquinol (DMQH2). This is 2-methoxy-6-polyprenyl-1,4-benzoquinol methylase, mitochondrial from Rattus norvegicus (Rat).